The following is a 282-amino-acid chain: Putative 4-diphosphocytidyl-2-C-methyl-D-erythritol kinase (282 aa).

K9 is a catalytic residue. 93 to 103 (PVSAGLAGGST) is a binding site for ATP. D135 is an active-site residue.

Belongs to the GHMP kinase family. IspE subfamily.

The enzyme catalyses 4-CDP-2-C-methyl-D-erythritol + ATP = 4-CDP-2-C-methyl-D-erythritol 2-phosphate + ADP + H(+). In terms of biological role, catalyzes the phosphorylation of the position 2 hydroxy group of 4-diphosphocytidyl-2C-methyl-D-erythritol. This Staphylococcus saprophyticus subsp. saprophyticus (strain ATCC 15305 / DSM 20229 / NCIMB 8711 / NCTC 7292 / S-41) protein is Putative 4-diphosphocytidyl-2-C-methyl-D-erythritol kinase.